A 327-amino-acid polypeptide reads, in one-letter code: WRKY transcription factor WRKY76 (327 aa).

The stretch at 56 to 76 (AKILEAKVTQMSEENRRLTEV) forms a coiled coil. A disordered region spans residues 88 to 134 (LGLDGSASPPRPVSPLSGKKRSRESMETANSCDANSNRHQGGDADHA). The Nuclear localization signal signature appears at 106-112 (KKRSRES). The segment covering 114-126 (ETANSCDANSNRH) has biased composition (polar residues). The segment at residues 160–226 (DTSLVVKDGY…YEGEHNHPHP (67 aa)) is a DNA-binding region (WRKY).

It belongs to the WRKY group II-a family.

It localises to the nucleus. In terms of biological role, transcription repressor. Interacts specifically with the W box (5'-(T)TGAC[CT]-3'), a frequently occurring elicitor-responsive cis-acting element. Regulates, probably indirectly, the activation of defense-related genes during defense response. Modulates plant innate immunity against X.oryzae pv. oryzae (Xoo). The sequence is that of WRKY transcription factor WRKY76 from Oryza sativa subsp. indica (Rice).